Here is a 486-residue protein sequence, read N- to C-terminus: MITTEIKRVKNHINGEWVESTGTEVEAVPNPATGKIIAYVPLSPKEDVEKAVEAAKAAYETWSKVPVPNRSRQLYKYLQLLQENKEELAKIITLENGKTLTDATGEVQRGIEAVELATSTPNLMMGQALPNIASGIDGSIWRYPIGVVAGITPFNFPMMIPLWMFPLAIACGNTFVLKTSERTPLLAERLVELFYEAGFPKGVLNLVQGGKDVVNSILENKDIQAVSFVGSEPVARYVYETGTKHGKRVQALAGAKNHAIVMPDCNLEKTVQGVIGSAFASSGERCMACSVVAVVDEIADEFIDVLVAETKKLKVGDGFHEDNYVGPLIRESHKERVLGYINSGVADGATLLVDGRKIKEEVGEGYFVGATIFDGVNQEMKIWQDEIFAPVLSIVRVKDLEEGIKLTNQSKFANGAVIYTSNGKHAQTFRDNIDAGMIGVNVNVPAPMAFFAFAGNKASFFGDLGTNGTDGVQFYTRKKVVTERWF.

The NAD(+) site is built by phenylalanine 154, lysine 178, glutamate 181, arginine 182, and serine 231. Catalysis depends on cysteine 286, which acts as the Nucleophile. Glutamate 386 is an NAD(+) binding site.

Belongs to the aldehyde dehydrogenase family. IolA subfamily. In terms of assembly, homotetramer.

It catalyses the reaction 3-oxopropanoate + NAD(+) + CoA + H2O = hydrogencarbonate + acetyl-CoA + NADH + H(+). The enzyme catalyses 2-methyl-3-oxopropanoate + NAD(+) + CoA + H2O = propanoyl-CoA + hydrogencarbonate + NADH + H(+). The protein operates within polyol metabolism; myo-inositol degradation into acetyl-CoA; acetyl-CoA from myo-inositol: step 7/7. Functionally, catalyzes the oxidation of malonate semialdehyde (MSA) and methylmalonate semialdehyde (MMSA) into acetyl-CoA and propanoyl-CoA, respectively. Is involved in a myo-inositol catabolic pathway. Bicarbonate, and not CO2, is the end-product of the enzymatic reaction. This is Malonate-semialdehyde dehydrogenase 1 from Bacillus thuringiensis (strain Al Hakam).